The primary structure comprises 519 residues: Chaperone SurA (519 aa).

The N-terminal stretch at 1-31 (MMRSLHSLRRMSGTVLALMLAAGLPLSAAQA) is a signal peptide. Low complexity-rich tracts occupy residues 31 to 45 (AQPA…QKPA) and 197 to 207 (PAAAQATRAPA). Disordered regions lie at residues 31 to 50 (AQPA…PAPS) and 196 to 221 (NPAA…PAQS). In terms of domain architecture, PpiC 1 spans 223–324 (PAMLVLAQIL…NGFHILKVVD (102 aa)). The interval 328-361 (GGQPAQAARPAPAPAPQQPSSFQEGPSVAAPQGP) is disordered. Residues 364 to 463 (VTQTHARHIL…FGWHLIQVLE (100 aa)) form the PpiC 2 domain.

Its subcellular location is the periplasm. It carries out the reaction [protein]-peptidylproline (omega=180) = [protein]-peptidylproline (omega=0). Chaperone involved in the correct folding and assembly of outer membrane proteins. Recognizes specific patterns of aromatic residues and the orientation of their side chains, which are found more frequently in integral outer membrane proteins. May act in both early periplasmic and late outer membrane-associated steps of protein maturation. This is Chaperone SurA from Bordetella pertussis (strain Tohama I / ATCC BAA-589 / NCTC 13251).